A 282-amino-acid chain; its full sequence is Bifunctional protein FolD (282 aa).

NADP(+) is bound by residues 165 to 167, Ser-190, and Ile-231; that span reads NRS.

The protein belongs to the tetrahydrofolate dehydrogenase/cyclohydrolase family. As to quaternary structure, homodimer.

The enzyme catalyses (6R)-5,10-methylene-5,6,7,8-tetrahydrofolate + NADP(+) = (6R)-5,10-methenyltetrahydrofolate + NADPH. The catalysed reaction is (6R)-5,10-methenyltetrahydrofolate + H2O = (6R)-10-formyltetrahydrofolate + H(+). It participates in one-carbon metabolism; tetrahydrofolate interconversion. Catalyzes the oxidation of 5,10-methylenetetrahydrofolate to 5,10-methenyltetrahydrofolate and then the hydrolysis of 5,10-methenyltetrahydrofolate to 10-formyltetrahydrofolate. This is Bifunctional protein FolD from Clostridium botulinum (strain Langeland / NCTC 10281 / Type F).